The sequence spans 161 residues: Nucleotide-binding protein PFL_4775 (161 aa).

The protein belongs to the YajQ family.

Functionally, nucleotide-binding protein. The protein is Nucleotide-binding protein PFL_4775 of Pseudomonas fluorescens (strain ATCC BAA-477 / NRRL B-23932 / Pf-5).